We begin with the raw amino-acid sequence, 64 residues long: Large ribosomal subunit protein uL29 (64 aa).

This sequence belongs to the universal ribosomal protein uL29 family.

The protein is Large ribosomal subunit protein uL29 of Ralstonia pickettii (strain 12J).